Here is a 184-residue protein sequence, read N- to C-terminus: ATP synthase subunit b, chloroplastic (184 aa).

A helical membrane pass occupies residues 27–49; the sequence is LATNLINLSVVLGVLVFFGKGVL.

This sequence belongs to the ATPase B chain family. In terms of assembly, F-type ATPases have 2 components, F(1) - the catalytic core - and F(0) - the membrane proton channel. F(1) has five subunits: alpha(3), beta(3), gamma(1), delta(1), epsilon(1). F(0) has four main subunits: a(1), b(1), b'(1) and c(10-14). The alpha and beta chains form an alternating ring which encloses part of the gamma chain. F(1) is attached to F(0) by a central stalk formed by the gamma and epsilon chains, while a peripheral stalk is formed by the delta, b and b' chains.

The protein resides in the plastid. Its subcellular location is the chloroplast thylakoid membrane. Its function is as follows. F(1)F(0) ATP synthase produces ATP from ADP in the presence of a proton or sodium gradient. F-type ATPases consist of two structural domains, F(1) containing the extramembraneous catalytic core and F(0) containing the membrane proton channel, linked together by a central stalk and a peripheral stalk. During catalysis, ATP synthesis in the catalytic domain of F(1) is coupled via a rotary mechanism of the central stalk subunits to proton translocation. In terms of biological role, component of the F(0) channel, it forms part of the peripheral stalk, linking F(1) to F(0). In Cicer arietinum (Chickpea), this protein is ATP synthase subunit b, chloroplastic.